The sequence spans 394 residues: Acetate kinase (394 aa).

N10 provides a ligand contact to Mg(2+). K17 is an ATP binding site. Residue R87 coordinates substrate. D144 acts as the Proton donor/acceptor in catalysis. ATP-binding positions include 204–208 (HLGNG), 279–281 (DMR), and 327–331 (GIGEN). Position 381 (E381) interacts with Mg(2+).

Belongs to the acetokinase family. In terms of assembly, homodimer. The cofactor is Mg(2+). Mn(2+) is required as a cofactor.

Its subcellular location is the cytoplasm. It carries out the reaction acetate + ATP = acetyl phosphate + ADP. The protein operates within metabolic intermediate biosynthesis; acetyl-CoA biosynthesis; acetyl-CoA from acetate: step 1/2. Catalyzes the formation of acetyl phosphate from acetate and ATP. Can also catalyze the reverse reaction. This chain is Acetate kinase, found in Pseudomonas aeruginosa (strain LESB58).